The primary structure comprises 321 residues: Cysteine and histidine-rich domain-containing protein 1 (321 aa).

The Zn(2+) site is built by C9, C14, C28, H31, C46, C47, C63, H68, C152, C157, C170, H173, C188, C189, C205, and H210. 2 CHORD domains span residues 9 to 68 (CYHK…RGKH) and 152 to 210 (CRNN…SGEH). Positions 218-308 (VSKFREDWFS…KHGTGWPRLK (91 aa)) constitute a CS domain.

Functionally, regulates centrosome duplication. Controls the secretion of the tyrosine kinase receptor let-23/EGFR from the endoplasmic reticulum and is required for the localization of let-23/EGFR to the plasma membrane of vulval precursor cells. It thus plays a role in positively regulating let/EGFR signaling, and anchor cell and vulval precursor cell alignment. Plays a role in vulval development and morphogenesis. This is Cysteine and histidine-rich domain-containing protein 1 from Caenorhabditis elegans.